The primary structure comprises 120 residues: Ribonuclease P protein component 2 (120 aa).

It belongs to the eukaryotic/archaeal RNase P protein component 2 family. Consists of a catalytic RNA component and at least 4-5 protein subunits. Forms a subcomplex with Rnp3 which stimulates the catalytic RNA.

It is found in the cytoplasm. The enzyme catalyses Endonucleolytic cleavage of RNA, removing 5'-extranucleotides from tRNA precursor.. In terms of biological role, part of ribonuclease P, a protein complex that generates mature tRNA molecules by cleaving their 5'-ends. The RNA is catalytic, but its KM for pre-tRNA is 170-fold decreased in the presence of the 4 known protein subunits (Rnp1-4). The protein subunits also decrease the amount of Mg(2+) needed for activity. This is Ribonuclease P protein component 2 from Pyrococcus furiosus (strain ATCC 43587 / DSM 3638 / JCM 8422 / Vc1).